We begin with the raw amino-acid sequence, 125 residues long: Allatostatin (125 aa).

A signal peptide spans 1–26 (MKTSAYNVYLGVVAAMLALLFVTINA). Residues 27 to 106 (APMEADDETA…SRLARQWRAD (80 aa)) constitute a propeptide that is removed on maturation. Residue Gln109 is modified to Pyrrolidone carboxylic acid.

Belongs to the allatostatin family.

It is found in the secreted. Strongly inhibits juvenile hormone biosynthesis in vitro by the corpora allata from fifth-stadium larvae and adult females. This is Allatostatin from Spodoptera frugiperda (Fall armyworm).